The chain runs to 370 residues: UDP-3-O-acylglucosamine N-acyltransferase (370 aa).

His252 (proton acceptor) is an active-site residue. Residues 348–370 (NAAAEKRDGPAPNAASKATGDKV) form a disordered region.

The protein belongs to the transferase hexapeptide repeat family. LpxD subfamily. As to quaternary structure, homotrimer.

It carries out the reaction a UDP-3-O-[(3R)-3-hydroxyacyl]-alpha-D-glucosamine + a (3R)-hydroxyacyl-[ACP] = a UDP-2-N,3-O-bis[(3R)-3-hydroxyacyl]-alpha-D-glucosamine + holo-[ACP] + H(+). Its pathway is bacterial outer membrane biogenesis; LPS lipid A biosynthesis. Its function is as follows. Catalyzes the N-acylation of UDP-3-O-acylglucosamine using 3-hydroxyacyl-ACP as the acyl donor. Is involved in the biosynthesis of lipid A, a phosphorylated glycolipid that anchors the lipopolysaccharide to the outer membrane of the cell. This Paraburkholderia phytofirmans (strain DSM 17436 / LMG 22146 / PsJN) (Burkholderia phytofirmans) protein is UDP-3-O-acylglucosamine N-acyltransferase.